A 446-amino-acid chain; its full sequence is Protein odr-4 homolog (446 aa).

A helical transmembrane segment spans residues 76–96 (ASQVGRMLPGGLMVLGVFLMT). Positions 394–415 (HPEKRESEPASQHLESKPENKA) are enriched in basic and acidic residues. A disordered region spans residues 394 to 417 (HPEKRESEPASQHLESKPENKARS). The helical transmembrane segment at 426–446 (GLVISTIVASIAIIISFYYIM) threads the bilayer.

It belongs to the ODR-4 family.

The protein localises to the membrane. Its function is as follows. May play a role in the trafficking of a subset of G-protein coupled receptors. This is Protein odr-4 homolog (odr4) from Xenopus laevis (African clawed frog).